The sequence spans 559 residues: Kelch repeat and BTB domain-containing protein 2 (559 aa).

Residues 26–95 (CDVIITIGDG…LYNRHISSMN (70 aa)) form the BTB domain. One can recognise a BACK domain in the interval 128–223 (CIYIYHRLYE…CIDIQNLDKK (96 aa)). Kelch repeat units follow at residues 305 to 352 (EIII…VIDD), 353 to 399 (MIYA…VFDQ), and 401 to 463 (IYII…SHKD).

In terms of assembly, interacts (via BTB domain) with host CUL3.

It is found in the host cytoplasm. Functionally, probable substrate-specific adapter of CUL3-containing E3 ubiquitin-protein ligases which mediate the ubiquitination and subsequent proteasomal degradation of host target proteins. This Mus musculus (Mouse) protein is Kelch repeat and BTB domain-containing protein 2 (KBTB2).